A 1476-amino-acid chain; its full sequence is Coiled-coil domain-containing protein 88B (1476 aa).

Positions 253–481 form a coiled coil; it reads SHHLALQLAN…RGLLQVLQGQ (229 aa). Disordered regions lie at residues 427 to 451, 509 to 706, 825 to 866, and 1323 to 1476; these read QRSL…SLQD, VAFD…EGAL, RRQW…ERRE, and LMRP…SLSQ. The residue at position 436 (serine 436) is a Phosphoserine. The span at 572-586 shows a compositional bias: polar residues; it reads SDWSPQESGSPVETQ. The residue at position 596 (serine 596) is a Phosphoserine. 3 stretches are compositionally biased toward basic and acidic residues: residues 678–690, 825–834, and 842–866; these read EARE…EGTV, RRQWEREGSR, and AEER…ERRE. Residues 720–1303 are a coiled coil; it reads LASGVAEQEA…KIMDQYRVLE (584 aa). Residues serine 1348 and serine 1379 each carry the phosphoserine modification. Residues 1448 to 1469 show a composition bias toward basic and acidic residues; it reads LQEHETDANREGPEVQEPEKRP.

It belongs to the CCDC88 family. Homodimer. Interacts with DOCK8. Interacts (via C-terminus) with intact microtubules. Interacts with dynein-dynactin motor complex. Interacts (via C-terminus) with HSPA5. As to expression, expressed in endothelium (at protein level). Expressed in NK cells (at protein level).

The protein localises to the membrane. It localises to the cytoplasm. The protein resides in the cytoskeleton. Its subcellular location is the microtubule organizing center. It is found in the endoplasmic reticulum. The protein localises to the golgi apparatus. Its function is as follows. Acts as a positive regulator of T-cell maturation and inflammatory function. Required for several functions of T-cells, in both the CD4(+) and the CD8(+) compartments and this includes expression of cell surface markers of activation, proliferation, and cytokine production in response to specific or non-specific stimulation. Enhances NK cell cytotoxicity by positively regulating polarization of microtubule-organizing center (MTOC) to cytotoxic synapse, lytic granule transport along microtubules, and dynein-mediated clustering to MTOC. Interacts with HSPA5 and stabilizes the interaction between HSPA5 and ERN1, leading to suppression of ERN1-induced JNK activation and endoplasmic reticulum stress-induced apoptosis. In Homo sapiens (Human), this protein is Coiled-coil domain-containing protein 88B (CCDC88B).